Consider the following 230-residue polypeptide: Flagellar L-ring protein (230 aa).

The signal sequence occupies residues 1-26 (MKQVRLLPSATVRAACAVAVAAFAAG). Residue Cys27 is the site of N-palmitoyl cysteine attachment. Cys27 carries S-diacylglycerol cysteine lipidation.

The protein belongs to the FlgH family. As to quaternary structure, the basal body constitutes a major portion of the flagellar organelle and consists of four rings (L,P,S, and M) mounted on a central rod.

Its subcellular location is the cell outer membrane. It is found in the bacterial flagellum basal body. Assembles around the rod to form the L-ring and probably protects the motor/basal body from shearing forces during rotation. The chain is Flagellar L-ring protein from Burkholderia lata (strain ATCC 17760 / DSM 23089 / LMG 22485 / NCIMB 9086 / R18194 / 383).